The sequence spans 332 residues: Glycerol-3-phosphate dehydrogenase [NAD(P)+] (332 aa).

NADPH contacts are provided by serine 11, tryptophan 12, arginine 32, arginine 33, and lysine 106. The sn-glycerol 3-phosphate site is built by lysine 106 and glycine 136. Position 140 (alanine 140) interacts with NADPH. Sn-glycerol 3-phosphate is bound by residues lysine 191, aspartate 244, serine 254, arginine 255, and asparagine 256. Lysine 191 (proton acceptor) is an active-site residue. Arginine 255 contributes to the NADPH binding site. Residues valine 280 and glutamate 282 each coordinate NADPH.

The protein belongs to the NAD-dependent glycerol-3-phosphate dehydrogenase family.

Its subcellular location is the cytoplasm. It catalyses the reaction sn-glycerol 3-phosphate + NAD(+) = dihydroxyacetone phosphate + NADH + H(+). The enzyme catalyses sn-glycerol 3-phosphate + NADP(+) = dihydroxyacetone phosphate + NADPH + H(+). Its pathway is membrane lipid metabolism; glycerophospholipid metabolism. In terms of biological role, catalyzes the reduction of the glycolytic intermediate dihydroxyacetone phosphate (DHAP) to sn-glycerol 3-phosphate (G3P), the key precursor for phospholipid synthesis. In Corynebacterium urealyticum (strain ATCC 43042 / DSM 7109), this protein is Glycerol-3-phosphate dehydrogenase [NAD(P)+].